The primary structure comprises 199 residues: TATA-box-binding protein (199 aa).

2 repeat units span residues 10 to 86 and 101 to 177.

Belongs to the TBP family.

Its function is as follows. General factor that plays a role in the activation of archaeal genes transcribed by RNA polymerase. Binds specifically to the TATA box promoter element which lies close to the position of transcription initiation. This Pyrobaculum calidifontis (strain DSM 21063 / JCM 11548 / VA1) protein is TATA-box-binding protein.